The chain runs to 289 residues: MAPKRQSAILPQPKKPRPVAAPKLEDKSASPGLPKGEKEQQEAIEHIDEVQNEIDRLNEQASEEILKVEQKYNKLRQPFFQKRSELIAKIPNFWVTTFVNHPQVSALLGEEDEEALHYLTRVEVTEFEDIKSGYRIDFYFDENPYFENKVLSKEFHLNESGDPSSKSTEIKWKSGKDLTKRSSQTQNKASRKRQHEEPESFFTWFTDHSDAGADELGEVIKDDIWPNPLQYYLVPDMDDEEGEAEDDDDDDEEEEGLEDIDEEGDEDEGEEDDDEDEGEEGEEDEGEDD.

The segment at 1–42 is disordered; that stretch reads MAPKRQSAILPQPKKPRPVAAPKLEDKSASPGLPKGEKEQQE. Residue Ala-2 is modified to N,N,N-trimethylalanine. Residue Ser-7 is modified to Phosphoserine. Pro-11 bears the N6-acetyllysine mark. Position 15 is a phosphoserine (Lys-15). Lys-23 carries the N6-acetyllysine modification. Residues Leu-24, Ser-28, and Ser-62 each carry the phosphoserine modification. The interval 31-77 is dimerization; that stretch reads PGLPKGEKEQQEAIEHIDEVQNEIDRLNEQASEEILKVEQKYNKLRQ. N6-acetyllysine is present on Lys-67. Residues 78 to 224 are earmuff domain; that stretch reads PFFQKRSELI…ELGEVIKDDI (147 aa). Tyr-145 bears the Phosphotyrosine mark. Lys-149 bears the N6-acetyllysine mark. Lys-153 participates in a covalent cross-link: Glycyl lysine isopeptide (Lys-Gly) (interchain with G-Cter in ubiquitin). Disordered stretches follow at residues 157–206 and 235–289; these read LNES…TWFT and PDMD…GEDD. The span at 168–180 shows a compositional bias: basic and acidic residues; the sequence is TEIKWKSGKDLTK. Lys-171 bears the N6-acetyllysine mark. Residues 236–289 show a composition bias toward acidic residues; that stretch reads DMDDEEGEAEDDDDDDEEEEGLEDIDEEGDEDEGEEDDDEDEGEEGEEDEGEDD.

The protein belongs to the nucleosome assembly protein (NAP) family. In terms of assembly, headphone-shaped homodimer. Isoform 1 and isoform 2 interact directly with each other and with ANP32A within the tripartite INHAT (inhibitor of acetyltransferases) complex. Isoform 1 and isoform 2 interact also with histones. Isoform 2 is a omponent of the SET complex, composed of at least ANP32A, APEX1, HMGB2, NME1, SET and TREX1, but not NME2 or TREX2. Within this complex, directly interacts with ANP32A, NME1, HMGB2 and TREX1; the interaction with ANP32A is enhanced after cleavage. Interacts with APBB1, CHTOP, SETBP1, SGO1. Post-translationally, isoform 2 is phosphorylated on Ser-15 and Ser-24. In terms of processing, isoform 2 is acetylated on Lys-11. Some glutamate residues are glycylated by TTLL8. This modification occurs exclusively on glutamate residues and results in a glycine chain on the gamma-carboxyl group. Post-translationally, N-terminus of isoform 1 is methylated by METTL11A/NTM1. Mainly trimethylated. In terms of processing, cleaved after Lys-176 by GZMA. The cleavage inhibits its nucleosome assembly activity and disrupts the inhibition on NME1. As to expression, widely expressed, with higher expression in brain, thymus, spleen and bone marrow, and lower expression in heart, liver and muscle.

It is found in the cytoplasm. The protein resides in the cytosol. The protein localises to the endoplasmic reticulum. Its subcellular location is the nucleus. It localises to the nucleoplasm. Multitasking protein, involved in apoptosis, transcription, nucleosome assembly and histone chaperoning. Isoform 2 anti-apoptotic activity is mediated by inhibition of the GZMA-activated DNase, NME1. In the course of cytotoxic T-lymphocyte (CTL)-induced apoptosis, GZMA cleaves SET, disrupting its binding to NME1 and releasing NME1 inhibition. Isoform 1 and isoform 2 are potent inhibitors of protein phosphatase 2A. Isoform 1 and isoform 2 inhibit EP300/CREBBP and PCAF-mediated acetylation of histones (HAT) and nucleosomes, most probably by masking the accessibility of lysines of histones to the acetylases. The predominant target for inhibition is histone H4. HAT inhibition leads to silencing of HAT-dependent transcription and prevents active demethylation of DNA. Both isoforms stimulate DNA replication of the adenovirus genome complexed with viral core proteins; however, isoform 2 specific activity is higher. The protein is Protein SET (Set) of Rattus norvegicus (Rat).